The primary structure comprises 127 residues: Protein ApaG (127 aa).

An ApaG domain is found at 3-127 (DADVYAISVE…FVLAIPRTLH (125 aa)).

In Stenotrophomonas maltophilia (strain K279a), this protein is Protein ApaG.